Here is a 462-residue protein sequence, read N- to C-terminus: ATP synthase subunit beta (462 aa).

151 to 158 (GGAGVGKT) serves as a coordination point for ATP.

The protein belongs to the ATPase alpha/beta chains family. In terms of assembly, F-type ATPases have 2 components, CF(1) - the catalytic core - and CF(0) - the membrane proton channel. CF(1) has five subunits: alpha(3), beta(3), gamma(1), delta(1), epsilon(1). CF(0) has three main subunits: a(1), b(2) and c(9-12). The alpha and beta chains form an alternating ring which encloses part of the gamma chain. CF(1) is attached to CF(0) by a central stalk formed by the gamma and epsilon chains, while a peripheral stalk is formed by the delta and b chains.

It is found in the cell inner membrane. The catalysed reaction is ATP + H2O + 4 H(+)(in) = ADP + phosphate + 5 H(+)(out). Functionally, produces ATP from ADP in the presence of a proton gradient across the membrane. The catalytic sites are hosted primarily by the beta subunits. The protein is ATP synthase subunit beta of Chlorobium limicola.